The primary structure comprises 160 residues: UPF0260 protein Rleg2_0895 (160 aa).

The protein belongs to the UPF0260 family.

In Rhizobium leguminosarum bv. trifolii (strain WSM2304), this protein is UPF0260 protein Rleg2_0895.